Consider the following 146-residue polypeptide: Hemoglobin subunit beta (146 aa).

The Globin domain maps to 2–146 (HWTADEKQLI…VAHALALGYH (145 aa)). Heme b-binding residues include His-63 and His-92.

Belongs to the globin family. Heterotetramer of two alpha chains and two beta chains. In terms of tissue distribution, red blood cells.

Functionally, involved in oxygen transport from the lung to the various peripheral tissues. This Chrysemys picta bellii (Western painted turtle) protein is Hemoglobin subunit beta (HBB).